We begin with the raw amino-acid sequence, 318 residues long: Pheromone-regulated membrane protein 5 (318 aa).

A helical membrane pass occupies residues 78-98 (FIVVGGIAGVIFLAILLWWVI). A Phosphoserine modification is found at S129. Positions 238-247 (TISSSSASSL) are enriched in low complexity. Residues 238–318 (TISSSSASSL…HMLEGKEQDE (81 aa)) form a disordered region. A compositionally biased stretch (basic and acidic residues) spans 250-261 (GNEKEVGEDIRK). Positions 276-285 (SPESDGSVNR) are enriched in polar residues. A phosphoserine mark is found at S279, S282, and S288. The span at 309–318 (HMLEGKEQDE) shows a compositional bias: basic and acidic residues. A Glycyl lysine isopeptide (Lys-Gly) (interchain with G-Cter in ubiquitin) cross-link involves residue K314.

It belongs to the PRM5 family.

The protein localises to the membrane. In Saccharomyces cerevisiae (strain Lalvin EC1118 / Prise de mousse) (Baker's yeast), this protein is Pheromone-regulated membrane protein 5 (PRM5).